Consider the following 174-residue polypeptide: UPF0316 protein LMOf2365_1801 (174 aa).

Helical transmembrane passes span 4 to 24 (GIFI…IYTV), 36 to 56 (LAAL…SLVL), and 62 to 82 (IANV…GMKI).

Belongs to the UPF0316 family.

It localises to the cell membrane. In Listeria monocytogenes serotype 4b (strain F2365), this protein is UPF0316 protein LMOf2365_1801.